The following is an 843-amino-acid chain: Axin-2 (843 aa).

The disordered stretch occupies residues 1-75 (MSSAMLVTCL…EGRASPDSPL (75 aa)). Positions 21–30 (APRPPVPGEE) match the Tankyrase-binding motif motif. Residues 56 to 69 (RRNEDGLGEPEGRA) show a composition bias toward basic and acidic residues. In terms of domain architecture, RGS spans 81 to 200 (SLHSLLGDQD…LTSDIYLEYV (120 aa)). An interaction with GSK3B region spans residues 327-413 (VGSKKQLQRE…REGSELTLNS (87 aa)). The segment at 334-393 (QREMHRSVKANGQVSLPHFPRTHRLPKEMTPVEPATFAAELISRLEKLKLELESRHSLEE) is interaction with SIAH1 and SIAH2. Disordered regions lie at residues 396-435 (QQIREDEEREGSELTLNSREGAPTQHPLSLLPSGSYEEDP), 447-494 (LKTP…AASP), 561-674 (APET…RTTP), and 718-748 (ASQQRDRNHSATVQTGATPFSNPSLAPEDHK). The interaction with beta-catenin stretch occupies residues 413–476 (SREGAPTQHP…PDHHHHHHSQ (64 aa)). Composition is skewed to low complexity over residues 477–494 (YHSLLPPGGKLPPAAASP) and 588–597 (PGLALPAREG). Residues 727–741 (SATVQTGATPFSNPS) show a composition bias toward polar residues. The region spanning 761–843 (ASELVVTYFF…RILGKVERID (83 aa)) is the DIX domain.

Interacts with glycogen synthase kinase-3 beta (GSK3B) and beta-catenin. The interaction between axin and beta-catenin occurs via the armadillo repeats contained in beta-catenin. Interacts with SMAD7 and RNF111. Interacts with ANKRD6. Interacts with SIAH1. Interacts with SIAH2. In terms of processing, probably phosphorylated by GSK3B and dephosphorylated by PP2A. Post-translationally, ADP-ribosylated by tankyrase TNKS and TNKS2. Poly-ADP-ribosylated protein is recognized by RNF146, followed by ubiquitination and subsequent activation of the Wnt signaling pathway. Ubiquitinated by RNF146 when poly-ADP-ribosylated, leading to its degradation and subsequent activation of the Wnt signaling pathway. Deubiquitinated by USP34, deubiquitinated downstream of beta-catenin stabilization step: deubiquitination is important Wnt signaling to positively regulate beta-catenin (CTNBB1)-mediated transcription. Expressed in brain and lymphoblast.

The protein resides in the cytoplasm. Functionally, inhibitor of the Wnt signaling pathway. Down-regulates beta-catenin. Probably facilitate the phosphorylation of beta-catenin and APC by GSK3B. This is Axin-2 (AXIN2) from Homo sapiens (Human).